The primary structure comprises 423 residues: Citrate synthase-like protein clz17 (423 aa).

Residues histidine 357 and aspartate 413 contribute to the active site.

Belongs to the citrate synthase family.

It functions in the pathway secondary metabolite biosynthesis. In terms of biological role, citrate synthase-like protein; part of the gene cluster that mediates the biosynthesis of squalestatin S1 (SQS1, also known as zaragozic acid A), a heavily oxidized fungal polyketide that offers potent cholesterol lowering activity by targeting squalene synthase (SS). SQS1 is composed of a 2,8-dioxobicyclic[3.2.1]octane-3,4,5-tricarboxyclic acid core that is connected to two lipophilic polyketide arms. These initial steps feature the priming of an unusual benzoic acid starter unit onto the highly reducing polyketide synthase clz14, followed by oxaloacetate extension and product release to generate a tricarboxylic acid containing product. The phenylalanine ammonia lyase (PAL) clz10 and the acyl-CoA ligase clz12 are involved in transforming phenylalanine into benzoyl-CoA. The citrate synthase-like protein clz17 is involved in connecting the C-alpha-carbons of the hexaketide chain and oxaloacetate to afford the tricarboxylic acid unit. The potential hydrolytic enzymes, clz11 and clz13, are in close proximity to pks2 and may participate in product release. On the other side, the tetraketide arm is synthesized by a the squalestatin tetraketide synthase clz2 and enzymatically esterified to the core in the last biosynthetic step, by the acetyltransferase clz6. The biosynthesis of the tetraketide must involve 3 rounds of chain extension. After the first and second rounds methyl-transfer occurs, and in all rounds of extension the ketoreductase and dehydratase are active. The enoyl reductase and C-MeT of clz2 are not active in the final round of extension. The acetyltransferase clz6 appears to have a broad substrate selectivity for its acyl CoA substrate, allowing the in vitro synthesis of novel squalestatins. The biosynthesis of SQS1 requires several oxidative steps likely performed by oxidoreductases clz3, clz15 and clz16. Finally, in support of the identification of the cluster as being responsible for SQS1 production, the cluster contains a gene encoding a putative squalene synthase (SS) clz20, suggesting a likely mechanism for self-resistance. The sequence is that of Citrate synthase-like protein clz17 from Cochliobolus lunatus (Filamentous fungus).